Reading from the N-terminus, the 177-residue chain is Probable inosine/xanthosine triphosphatase (177 aa).

It belongs to the YjjX NTPase family. In terms of assembly, homodimer. Mg(2+) serves as cofactor. The cofactor is Mn(2+).

It carries out the reaction XTP + H2O = XDP + phosphate + H(+). The enzyme catalyses ITP + H2O = IDP + phosphate + H(+). Its function is as follows. Phosphatase that hydrolyzes non-canonical purine nucleotides such as XTP and ITP to their respective diphosphate derivatives. Probably excludes non-canonical purines from DNA/RNA precursor pool, thus preventing their incorporation into DNA/RNA and avoiding chromosomal lesions. The chain is Probable inosine/xanthosine triphosphatase from Halalkalibacterium halodurans (strain ATCC BAA-125 / DSM 18197 / FERM 7344 / JCM 9153 / C-125) (Bacillus halodurans).